We begin with the raw amino-acid sequence, 146 residues long: Large ribosomal subunit protein uL15 (146 aa).

Positions 1–52 are disordered; sequence MKLSNLSPKAGSKKRRRRVGRGIAAGQGASCGFGMRGQKSRSGTGTKAGFEG. The segment covering 11–20 has biased composition (basic residues); sequence GSKKRRRRVG. Over residues 23–35 the composition is skewed to gly residues; the sequence is IAAGQGASCGFGM.

Belongs to the universal ribosomal protein uL15 family. As to quaternary structure, part of the 50S ribosomal subunit.

Functionally, binds to the 23S rRNA. The polypeptide is Large ribosomal subunit protein uL15 (Picosynechococcus sp. (strain ATCC 27264 / PCC 7002 / PR-6) (Agmenellum quadruplicatum)).